The primary structure comprises 95 residues: MTSPVNVDVKLGVNKFNVDEDSPHIILKTDPDKQALEVLIKACPAGLYKKQDDGSVRFDYAGCLECGTCRILGLDTALEKWEYPRGTFGVEFRYG.

It belongs to the bacterial-type ferredoxin family. FixX subfamily.

In terms of biological role, could be part of an electron transfer system required for anaerobic carnitine reduction. Could be a 3Fe-4S cluster-containing protein. This Salmonella typhimurium (strain LT2 / SGSC1412 / ATCC 700720) protein is Ferredoxin-like protein FixX (fixX).